Consider the following 376-residue polypeptide: MFQLSVQDIHPGEQAGNKEEAIRQIAAALAQAGNVAGGYVDGMLAREQQTSTFLGNGIAIPHGTTDTRDQVLKTGVQVFQFPQGVTWGEGQVAYVAIGIAASSDEHLGLLRQLTHVLSDDSVAEQLKSATTAEELRALLMGEKQSEQLKLDNETMTLDVIASSLVTLQALNAARLKEAGAVDAAFVAKTINDSPMNLGQGIWLNDSAEGNLRSAVAVSRATQAFDVEGEKAALLVTVAMNDEQPIAVLKRLGDLLLNNKADRLLSADAATLLALLTSDDALTDDVLSAEFVVRNEHGLHARPGTMLVNTIKQFNSEITVTNLDGTGKPANGRSLMKVVALGVKKGHRLRFTAQGEDAEQALKAIGDAIAAGLGEGA.

In terms of domain architecture, PTS EIIA type-2 spans 2-142 (FQLSVQDIHP…EELRALLMGE (141 aa)). The active-site Tele-phosphohistidine intermediate; for EIIA activity is the H62. H62 is subject to Phosphohistidine; by HPr. The segment at 156–284 (TLDVIASSLV…LTSDDALTDD (129 aa)) is m domain. The HPr domain occupies 285 to 375 (VLSAEFVVRN…DAIAAGLGEG (91 aa)). The active-site Pros-phosphohistidine intermediate; for HPr activity is H299. H299 carries the post-translational modification Phosphohistidine; by EI.

The protein localises to the cytoplasm. The phosphoenolpyruvate-dependent sugar phosphotransferase system (sugar PTS), a major carbohydrate active transport system, catalyzes the phosphorylation of incoming sugar substrates concomitantly with their translocation across the cell membrane. The enzyme II FruAB PTS system is involved in fructose transport. The chain is Multiphosphoryl transfer protein (fruB) from Salmonella typhimurium (strain LT2 / SGSC1412 / ATCC 700720).